The sequence spans 279 residues: Gas vesicle protein L2 (279 aa).

It belongs to the gas vesicle GvpF/GvpL family. GvpF to GvpM interact with each other in vitro, and may form multi-subunit complex(es). Interacts with GvpC, GvpN and GvpO.

It localises to the gas vesicle. Its function is as follows. Proteins GvpF to GvpM might be involved in nucleating gas vesicle formation. A minor component of the gas vesicle. Gas vesicles are hollow, gas filled proteinaceous nanostructures found in several microbial planktonic microorganisms. They allow positioning of halobacteria at the optimal depth for growth in the poorly aerated, shallow brine pools of their habitat. Expression of 2 c-vac DNA fragments containing 2 divergently transcribed regions (gvpE-gvpF-gvpG-gvpH-gvpI-gvpJ-gvpK-gvpL-gvpM and gvpA-gvpC-gvpN-gvpO) allows H.volcanii to produce gas vesicles. This chain is Gas vesicle protein L2, found in Halobacterium salinarum (strain ATCC 700922 / JCM 11081 / NRC-1) (Halobacterium halobium).